A 332-amino-acid chain; its full sequence is Large ribosomal subunit protein mL44 (332 aa).

The transit peptide at 1 to 30 directs the protein to the mitochondrion; that stretch reads MASGLVRLLQQGPRCLLAPVAPKLVPPVRG. The 143-residue stretch at 86–228 folds into the RNase III domain; the sequence is DLLKTAFVNS…LITQMTGKEL (143 aa). Residues 236–306 enclose the DRBM domain; that stretch reads NPMGLLVEEL…ARVALRKLYG (71 aa).

This sequence belongs to the ribonuclease III family. Mitochondrion-specific ribosomal protein mL44 subfamily. As to quaternary structure, component of the mitochondrial ribosome large subunit (39S) which comprises a 16S rRNA and about 50 distinct proteins.

It is found in the mitochondrion. In terms of biological role, component of the 39S subunit of mitochondrial ribosome. May have a function in the assembly/stability of nascent mitochondrial polypeptides exiting the ribosome. The polypeptide is Large ribosomal subunit protein mL44 (MRPL44) (Pongo abelii (Sumatran orangutan)).